The sequence spans 195 residues: Ferredoxin-2, mitochondrial (195 aa).

Residues Met-1–Cys-61 constitute a mitochondrion transit peptide. A 2Fe-2S ferredoxin-type domain is found at Asn-81–Thr-182. [2Fe-2S] cluster is bound by residues Cys-117, Cys-123, Cys-126, and Cys-163.

It belongs to the adrenodoxin/putidaredoxin family. In terms of assembly, component of the mitochondrial core iron-sulfur cluster (ISC) complex composed of NFS1, LYRM4, NDUFAB1, ISCU, FXN, and FDX2; this complex is a heterohexamer containing two copies of each monomer. Form a heterodimer complex with NFS1. [2Fe-2S] cluster is required as a cofactor.

Its subcellular location is the mitochondrion. The protein localises to the mitochondrion matrix. In terms of biological role, electron donor, of the core iron-sulfur cluster (ISC) assembly complex, that acts to reduce the persulfide into sulfide during [2Fe-2S] clusters assembly on the scaffolding protein ISCU. The core iron-sulfur cluster (ISC) assembly complex is involved in the de novo synthesis of a [2Fe-2S] cluster, the first step of the mitochondrial iron-sulfur protein biogenesis. This process is initiated by the cysteine desulfurase complex (NFS1:LYRM4:NDUFAB1) that produces persulfide which is delivered on the scaffold protein ISCU in a FXN-dependent manner. Then this complex is stabilized by FDX2 which provides reducing equivalents to accomplish the [2Fe-2S] cluster assembly. Finally, the [2Fe-2S] cluster is transferred from ISCU to chaperone proteins, including HSCB, HSPA9 and GLRX5. Essential for coenzyme Q biosynthesis: together with FDXR, transfers the electrons required for the hydroxylation reaction performed by COQ6. The sequence is that of Ferredoxin-2, mitochondrial from Danio rerio (Zebrafish).